The following is a 240-amino-acid chain: Adapter protein MecA (240 aa).

Residues 118–138 (EQRAQQQKHSHKSEQKQTKQR) are disordered.

The protein belongs to the MecA family. Homodimer.

Its function is as follows. Enables the recognition and targeting of unfolded and aggregated proteins to the ClpC protease or to other proteins involved in proteolysis. In Staphylococcus haemolyticus (strain JCSC1435), this protein is Adapter protein MecA.